A 163-amino-acid polypeptide reads, in one-letter code: Phosphopantetheine adenylyltransferase (163 aa).

A substrate-binding site is contributed by Ser9. Residues 9 to 10 (SF) and His17 each bind ATP. 3 residues coordinate substrate: Lys41, Val78, and Arg92. Residues 93–95 (GLR), Glu103, and 128–134 (SRPITAT) contribute to the ATP site.

This sequence belongs to the bacterial CoaD family. In terms of assembly, homohexamer. Mg(2+) is required as a cofactor.

Its subcellular location is the cytoplasm. The catalysed reaction is (R)-4'-phosphopantetheine + ATP + H(+) = 3'-dephospho-CoA + diphosphate. The protein operates within cofactor biosynthesis; coenzyme A biosynthesis; CoA from (R)-pantothenate: step 4/5. Its function is as follows. Reversibly transfers an adenylyl group from ATP to 4'-phosphopantetheine, yielding dephospho-CoA (dPCoA) and pyrophosphate. This Rhizobium meliloti (strain 1021) (Ensifer meliloti) protein is Phosphopantetheine adenylyltransferase.